We begin with the raw amino-acid sequence, 89 residues long: MKIGPPYLTKYERARIIGVRAFQLSIGAPPLVDPERAGSRNPLDIARYEVDNGILPVSIYRYLPGGGGQSLSLSRLVELAREILGSEYV.

The protein belongs to the archaeal Rpo6/eukaryotic RPB6 RNA polymerase subunit family. Part of the RNA polymerase complex.

The protein localises to the cytoplasm. The enzyme catalyses RNA(n) + a ribonucleoside 5'-triphosphate = RNA(n+1) + diphosphate. DNA-dependent RNA polymerase (RNAP) catalyzes the transcription of DNA into RNA using the four ribonucleoside triphosphates as substrates. The protein is DNA-directed RNA polymerase subunit Rpo6 of Aeropyrum pernix (strain ATCC 700893 / DSM 11879 / JCM 9820 / NBRC 100138 / K1).